The primary structure comprises 317 residues: Transaldolase (317 aa).

Catalysis depends on Lys-132, which acts as the Schiff-base intermediate with substrate.

This sequence belongs to the transaldolase family. Type 1 subfamily. Homodimer.

Its subcellular location is the cytoplasm. The enzyme catalyses D-sedoheptulose 7-phosphate + D-glyceraldehyde 3-phosphate = D-erythrose 4-phosphate + beta-D-fructose 6-phosphate. Its pathway is carbohydrate degradation; pentose phosphate pathway; D-glyceraldehyde 3-phosphate and beta-D-fructose 6-phosphate from D-ribose 5-phosphate and D-xylulose 5-phosphate (non-oxidative stage): step 2/3. In terms of biological role, transaldolase is important for the balance of metabolites in the pentose-phosphate pathway. In Pseudoalteromonas atlantica (strain T6c / ATCC BAA-1087), this protein is Transaldolase.